Reading from the N-terminus, the 353-residue chain is Inactive ADP-ribosyltransferase ARH2 (353 aa).

Ser-27 carries the post-translational modification Phosphoserine.

It belongs to the ADP-ribosylglycohydrolase family. In terms of tissue distribution, expressed in the embryonic heart at E11.5.

It localises to the cytoplasm. The protein resides in the myofibril. It is found in the sarcomere. Its function is as follows. Required for myofibril assembly and outgrowth of the cardiac chambers in the developing heart. Appears to be catalytically inactive, showing no activity against O-acetyl-ADP-ribose. In Mus musculus (Mouse), this protein is Inactive ADP-ribosyltransferase ARH2 (Adprhl1).